Consider the following 461-residue polypeptide: MQVPLLRLQCGVNSYDWGRVGPESAAAKYAAATAPSDFTIEADKPYAELWMGTHPSLPSKDVETQRTLLDMVQDNLALMSPEVSERYGGKLPFLFKVLSIRKALSIQAHPNKKLAEALHARDPRNYPDDNHKPEMTIAITPFEGLCGFRPLAEIVHFLKAVAPLRYLIGVQTATDFENAVRGFENTEDPEQTKKNKVALRTLFTSLMQSASENIEQAARELVAAAQSSPETFASLVNAPDTNPTNAAELASIIIRLNEQFPNDIGLFVFFFLNFVRLEPGEAMFLKADDIHAYISGDIIECMASSDNVVRAGFTPKFKDVDTLTEMLTYSYAPIDEQKLQPTDYPYTVLNAAAYSSASDSLLYDPPIEEFSVVKTSLRRTGAKATFDPLTGPSILICTGGTGKISVGHKTEEVKEGYVFFVGANAECIIENTGTGSDEENVFTTFKAFCDLTGKEDMANGH.

Residues Gln-107, His-109, Glu-134, and His-291 each coordinate Zn(2+). Arg-310 is an active-site residue.

The protein belongs to the mannose-6-phosphate isomerase type 1 family. Zn(2+) is required as a cofactor.

It is found in the cytoplasm. The catalysed reaction is D-mannose 6-phosphate = D-fructose 6-phosphate. It participates in nucleotide-sugar biosynthesis; GDP-alpha-D-mannose biosynthesis; alpha-D-mannose 1-phosphate from D-fructose 6-phosphate: step 1/2. Its function is as follows. Involved in the synthesis of the GDP-mannose and dolichol-phosphate-mannose required for a number of critical mannosyl transfer reactions. The polypeptide is Mannose-6-phosphate isomerase (manA) (Emericella nidulans (strain FGSC A4 / ATCC 38163 / CBS 112.46 / NRRL 194 / M139) (Aspergillus nidulans)).